The primary structure comprises 290 residues: ATP synthase gamma chain (290 aa).

The protein belongs to the ATPase gamma chain family. As to quaternary structure, F-type ATPases have 2 components, CF(1) - the catalytic core - and CF(0) - the membrane proton channel. CF(1) has five subunits: alpha(3), beta(3), gamma(1), delta(1), epsilon(1). CF(0) has three main subunits: a, b and c.

It localises to the cell inner membrane. Its function is as follows. Produces ATP from ADP in the presence of a proton gradient across the membrane. The gamma chain is believed to be important in regulating ATPase activity and the flow of protons through the CF(0) complex. This is ATP synthase gamma chain from Gemmatimonas aurantiaca (strain DSM 14586 / JCM 11422 / NBRC 100505 / T-27).